The chain runs to 171 residues: Small ribosomal subunit protein uS5 (171 aa).

Residues 14–77 (YIEKLVNIRR…DKARKAMKNV (64 aa)) enclose the S5 DRBM domain.

This sequence belongs to the universal ribosomal protein uS5 family. Part of the 30S ribosomal subunit. Contacts proteins S4 and S8.

With S4 and S12 plays an important role in translational accuracy. Functionally, located at the back of the 30S subunit body where it stabilizes the conformation of the head with respect to the body. This Vesicomyosocius okutanii subsp. Calyptogena okutanii (strain HA) protein is Small ribosomal subunit protein uS5.